Reading from the N-terminus, the 1213-residue chain is A disintegrin and metalloproteinase with thrombospondin motifs 2 (1213 aa).

The signal sequence occupies residues 1–28 (MDPPAGAARRLLCPALLLLLLPPPPLLL). A propeptide spanning residues 29–260 (LPPPPASVRL…INSSRRRVRR (232 aa)) is cleaved from the precursor. Asparagine 111 carries an N-linked (GlcNAc...) asparagine glycan. Residues 211-232 (YRRPPTPKPPPVSEPQALDTGV) are disordered. Residues 214-223 (PPTPKPPPVS) are compositionally biased toward pro residues. Asparagine 252 carries N-linked (GlcNAc...) asparagine glycosylation. Residues 267–471 (YNIEVLLGVD…HSYDCLRDDP (205 aa)) enclose the Peptidase M12B domain. Intrachain disulfides connect cysteine 344-cysteine 393, cysteine 387-cysteine 466, cysteine 426-cysteine 452, cysteine 493-cysteine 518, cysteine 504-cysteine 527, cysteine 513-cysteine 546, cysteine 540-cysteine 551, cysteine 574-cysteine 611, cysteine 578-cysteine 616, and cysteine 589-cysteine 601. Histidine 409 provides a ligand contact to Zn(2+). Glutamate 410 is a catalytic residue. Residues histidine 413 and histidine 419 each coordinate Zn(2+). The Disintegrin domain maps to 480 to 560 (PQLPGLHYSM…CIWLTPDILK (81 aa)). Residues 561-617 (RDGNWGAWTPFGSCSRTCGTGVKFRTRQCDNPHPANGGRTCSGLAYDFQLCNPQDCP) form the TSP type-1 1 domain. The short motif at 692 to 694 (RGD) is the Cell attachment site element. The segment at 723-851 (CKVVKGTFTR…LNVDDNNVLE (129 aa)) is spacer. 3 consecutive TSP type-1 domains span residues 855 to 913 (VRHE…NPQE), 915 to 975 (SQPV…NREL), and 976 to 1030 (CPGR…APCP). Residues asparagine 949, asparagine 950, and asparagine 994 are each glycosylated (N-linked (GlcNAc...) asparagine). Disulfide bonds link cysteine 988/cysteine 1024, cysteine 992/cysteine 1029, and cysteine 1003/cysteine 1013. An N-linked (GlcNAc...) asparagine glycan is attached at asparagine 1032. One can recognise a PLAC domain in the interval 1060 to 1098 (SKDQCQGDKSMFCRMEVLSRYCSIPSYNKLCCKSCNPPR). N-linked (GlcNAc...) asparagine glycosylation is found at asparagine 1099, asparagine 1147, and asparagine 1152.

In terms of assembly, may belong to a multimeric complex. Binds specifically to collagen type XIV. It depends on Zn(2+) as a cofactor. In terms of processing, the precursor is cleaved by a furin endopeptidase. Post-translationally, glycosylated. Can be O-fucosylated by POFUT2 on a serine or a threonine residue found within the consensus sequence C1-X(2)-(S/T)-C2-G of the TSP type-1 repeat domains where C1 and C2 are the first and second cysteine residue of the repeat, respectively. Fucosylated repeats can then be further glycosylated by the addition of a beta-1,3-glucose residue by the glucosyltransferase, B3GALTL. Fucosylation mediates the efficient secretion of ADAMTS family members. Can also be C-glycosylated with one or two mannose molecules on tryptophan residues within the consensus sequence W-X-X-W of the TPRs, and N-glycosylated. These other glycosylations can also facilitate secretion.

It localises to the secreted. The protein resides in the extracellular space. The protein localises to the extracellular matrix. The enzyme catalyses Cleaves the N-propeptide of collagen chain alpha1(I) at Pro-|-Gln and of alpha1(II) and alpha2(I) at Ala-|-Gln.. Cleaves the propeptides of type I and II collagen prior to fibril assembly. Does not act on type III collagen. Cleaves lysyl oxidase LOX at a site downstream of its propeptide cleavage site to produce a short LOX form with reduced collagen-binding activity. This chain is A disintegrin and metalloproteinase with thrombospondin motifs 2 (Adamts2), found in Mus musculus (Mouse).